Reading from the N-terminus, the 631-residue chain is Squalene--hopene cyclase (631 aa).

3 PFTB repeats span residues 15–56, 61–102, and 241–282; these read LDRA…LDRV, MEKI…KYIG, and EIRA…QHPA. Asp-376 functions as the Proton donor in the catalytic mechanism. PFTB repeat units follow at residues 400–441, 468–508, 516–557, and 574–622; these read MTKG…GEVT, IRRA…KAVG, IQKA…SQTA, and ARRG…LALG.

The protein belongs to the terpene cyclase/mutase family. As to quaternary structure, homodimer.

The protein resides in the cell membrane. It carries out the reaction squalene = hop-22(29)-ene. The enzyme catalyses squalene + H2O = hopan-22-ol. It participates in secondary metabolite biosynthesis; hopanoid biosynthesis. In terms of biological role, catalyzes the cyclization of squalene to two pentacyclic triterpenes, hop-22(29)-ene and hopan-22-ol (diplopterol); hopene and hopanol are formed at a constant ratio of 5:1. Is a key enzyme of hopanoid biosynthesis; hopanoids are components of the bacterial cytoplasmic membranes that play a vital role in stabilizing the membranes. In Alicyclobacillus acidocaldarius subsp. acidocaldarius (strain ATCC 27009 / DSM 446 / BCRC 14685 / JCM 5260 / KCTC 1825 / NBRC 15652 / NCIMB 11725 / NRRL B-14509 / 104-IA) (Bacillus acidocaldarius), this protein is Squalene--hopene cyclase (shc).